A 396-amino-acid polypeptide reads, in one-letter code: uncharacterized protein (396 aa).

11 helical membrane-spanning segments follow: residues 7–27 (SDDV…SIGL), 36–56 (AVSG…VGVL), 62–82 (VYDT…LFQI), 94–114 (LLFI…LAFF), 159–179 (VVAD…IPAL), 218–238 (IAFN…VSGY), 250–270 (GTLG…IFLF), 285–305 (TFLI…RLIV), 310–330 (LILL…LAAG), 340–360 (ILLA…MAIA), and 367–387 (VAPI…VGTF).

Its subcellular location is the cell membrane. This is an uncharacterized protein from Bacillus subtilis (strain 168).